A 245-amino-acid chain; its full sequence is Triosephosphate isomerase (245 aa).

Residue 9 to 11 (NWK) participates in substrate binding. H92 serves as the catalytic Electrophile. The active-site Proton acceptor is E164. Substrate contacts are provided by residues G170, S209, and 230–231 (GG).

It belongs to the triosephosphate isomerase family. Homodimer.

The protein resides in the cytoplasm. It carries out the reaction D-glyceraldehyde 3-phosphate = dihydroxyacetone phosphate. Its pathway is carbohydrate biosynthesis; gluconeogenesis. It participates in carbohydrate degradation; glycolysis; D-glyceraldehyde 3-phosphate from glycerone phosphate: step 1/1. Functionally, involved in the gluconeogenesis. Catalyzes stereospecifically the conversion of dihydroxyacetone phosphate (DHAP) to D-glyceraldehyde-3-phosphate (G3P). This chain is Triosephosphate isomerase, found in Cupriavidus pinatubonensis (strain JMP 134 / LMG 1197) (Cupriavidus necator (strain JMP 134)).